Reading from the N-terminus, the 334-residue chain is Formamidase (334 aa).

The CN hydrolase domain maps to 14-260 (FLVAAIQFPV…WEIVTGEIYP (247 aa)). Glutamate 60 acts as the Proton acceptor in catalysis. Lysine 133 acts as the Proton donor in catalysis. The active-site Nucleophile is cysteine 166.

It belongs to the carbon-nitrogen hydrolase superfamily. Aliphatic amidase family. Homotetramer.

The catalysed reaction is formamide + H2O = formate + NH4(+). Inhibited by iodoacetate. Appears to be regulated by the fur protein, but this effect is not mediated at the transcriptional level. Its function is as follows. Is an aliphatic amidase with a restricted substrate specificity, as it only hydrolyzes formamide. Probably involved in the nitrogen metabolism of H.pylori. This chain is Formamidase (amiF), found in Helicobacter pylori (strain ATCC 700392 / 26695) (Campylobacter pylori).